A 436-amino-acid polypeptide reads, in one-letter code: Adenylyltransferase and sulfurtransferase UBA4 (436 aa).

ATP-binding positions include Gly-74, Asp-95, 102-106 (SNLHR), Lys-119, and 163-164 (DT). Zn(2+) is bound by residues Cys-205 and Cys-208. The Glycyl thioester intermediate; for adenylyltransferase activity role is filled by Cys-222. 2 residues coordinate Zn(2+): Cys-283 and Cys-286. One can recognise a Rhodanese domain in the interval 335 to 434 (NEKDHILIDV…YIDEEDHSYP (100 aa)). The active-site Cysteine persulfide intermediate; for sulfurtransferase activity is Cys-393.

In the N-terminal section; belongs to the HesA/MoeB/ThiF family. UBA4 subfamily. Zn(2+) serves as cofactor.

The protein resides in the cytoplasm. The protein localises to the cytosol. It functions in the pathway tRNA modification; 5-methoxycarbonylmethyl-2-thiouridine-tRNA biosynthesis. Its function is as follows. Plays a central role in 2-thiolation of mcm(5)S(2)U at tRNA wobble positions of cytosolic tRNA(Lys), tRNA(Glu) and tRNA(Gln). Acts by mediating the C-terminal thiocarboxylation of sulfur carrier URM1. Its N-terminus first activates URM1 as acyl-adenylate (-COAMP), then the persulfide sulfur on the catalytic cysteine is transferred to URM1 to form thiocarboxylation (-COSH) of its C-terminus. The reaction probably involves hydrogen sulfide that is generated from the persulfide intermediate and that acts as a nucleophile towards URM1. Subsequently, a transient disulfide bond is formed. Does not use thiosulfate as sulfur donor; NFS1 probably acting as a sulfur donor for thiocarboxylation reactions. Prior mcm(5) tRNA modification by the elongator complex is required for 2-thiolation. May also be involved in protein urmylation. This chain is Adenylyltransferase and sulfurtransferase UBA4, found in Vanderwaltozyma polyspora (strain ATCC 22028 / DSM 70294 / BCRC 21397 / CBS 2163 / NBRC 10782 / NRRL Y-8283 / UCD 57-17) (Kluyveromyces polysporus).